Here is a 578-residue protein sequence, read N- to C-terminus: MDIQRSILIVALAVVSYLLVLQWNKDYGQPELPAASASMNTTQGLPDTPSAAGTSSDVPTAQSGAAGSEAADKPVAVSDKLIQVKTDVLDLAIDPRGGDIVQLGLLQYPRRLDRPDVPFPLFDNGRERTYLAQSGLTGADGPDASSAGRPLFHSAQGSYQLADGQNELVVDLSFSRDGVNYIKRFTFHRGLKADCSDKEKAQKKIECINENAYQVGVSYLIDNQSGKTWSGNLFAQLKRDGSADPSSTTATGVSTYLGAAVWTPDSPYKKISTKDMDKEQFKESVQGGWVAWLQHYFVTAWVPTKGEQHQVMTRKDGQGNYIVGFTGPTLSVPAGGKVETDLTLYAGPKLQKHLKELSPGLELTVDYGFLWFIAQPIFWLLQHIHSLIGNWGWSIIALTVLIKLAFFPLSAASYRSMARMRAVSPKMQAIKEQHGDDRQKMSQAMMELYKKEKINPLGGCLPILVQMPVFLSLYWVLLESVEMRQAPWLGWITDLSVKDPFFILPIVMGGTMLIQQMLNPTPPDPMQAKVMKLMPIIFTFFFLWFPAGLVLYWVVNNVLSIAQQWYITRKIEAAAKTA.

A helical membrane pass occupies residues 3-23 (IQRSILIVALAVVSYLLVLQW). The segment at 34–71 (AASASMNTTQGLPDTPSAAGTSSDVPTAQSGAAGSEAA) is disordered. A compositionally biased stretch (polar residues) spans 37-65 (ASMNTTQGLPDTPSAAGTSSDVPTAQSGA). Helical transmembrane passes span 361 to 381 (LELT…FWLL), 387 to 407 (LIGN…LAFF), 457 to 477 (LGGC…YWVL), 500 to 520 (PFFI…MLNP), and 535 to 555 (PIIF…YWVV).

The protein belongs to the OXA1/ALB3/YidC family. Type 1 subfamily. In terms of assembly, interacts with the Sec translocase complex via SecD. Specifically interacts with transmembrane segments of nascent integral membrane proteins during membrane integration.

It is found in the cell inner membrane. Its function is as follows. Required for the insertion and/or proper folding and/or complex formation of integral membrane proteins into the membrane. Involved in integration of membrane proteins that insert both dependently and independently of the Sec translocase complex, as well as at least some lipoproteins. Aids folding of multispanning membrane proteins. The polypeptide is Membrane protein insertase YidC (Pseudomonas paraeruginosa (strain DSM 24068 / PA7) (Pseudomonas aeruginosa (strain PA7))).